Consider the following 447-residue polypeptide: Citrate synthase-like protein oryE (447 aa).

Active-site residues include H331 and D387.

Belongs to the citrate synthase family.

It participates in secondary metabolite biosynthesis. Functionally, citrate synthase-like protein; part of the gene cluster that mediates the biosynthesis of oryzines, natural products with an unusual maleidride backbone. The two subunits of the fungal fatty acid synthase oryfasA and oryfasB probably form octenoic acid. This fatty acid is most likely activated by the acyl-CoA ligase oryP to give octenyl-CoA before the citrate synthase-like protein oryE catalyzes condensation with oxaloacetate to form tricarboxylic acid. The next steps of the pathways are conjectural, but a favorite possible route has been proposed, beginning with decarboxylation and concomitant dehydration by the decarboxylase oryM, followed by tautomerization, which may lead to the production of a diene intermediate. Reduction of this diene intermediate could give the known metabolite piliformic acid. On the pathway to oryzine B and oryzine A, however, hydroxylation of the diene by the alpha-ketoglutarate-dependent dioxygenase oryG and lactonisation by the lactonohydrolases oryH or oryL could give oryzine B directly. Finally, enoyl reduction by the dehydrogenase oryD would then convert oryzine B into oryzine A. The sequence is that of Citrate synthase-like protein oryE from Aspergillus oryzae (strain ATCC 42149 / RIB 40) (Yellow koji mold).